Here is a 180-residue protein sequence, read N- to C-terminus: Dynactin subunit 6 (180 aa).

The protein belongs to the dynactin subunits 5/6 family. Dynactin subunit 6 subfamily. Subunit of dynactin, a multiprotein complex part of a tripartite complex with dynein and a adapter, such as BICDL1, BICD2 or HOOK3. The dynactin complex is built around ACTR1A/ACTB filament and consists of an actin-related filament composed of a shoulder domain, a pointed end and a barbed end.

It localises to the cytoplasm. The protein resides in the cytoskeleton. In terms of biological role, part of the dynactin complex that activates the molecular motor dynein for ultra-processive transport along microtubules. The chain is Dynactin subunit 6 (dnc-6) from Caenorhabditis elegans.